The chain runs to 284 residues: UPF0276 protein PA3283 (284 aa).

It belongs to the UPF0276 family.

This is UPF0276 protein PA3283 from Pseudomonas aeruginosa (strain ATCC 15692 / DSM 22644 / CIP 104116 / JCM 14847 / LMG 12228 / 1C / PRS 101 / PAO1).